The following is a 443-amino-acid chain: Mitochondrial distribution and morphology protein 10 (443 aa).

It belongs to the MDM10 family. In terms of assembly, component of the ER-mitochondria encounter structure (ERMES) or MDM complex, composed of MMM1, MDM10, MDM12 and MDM34. Associates with the mitochondrial outer membrane sorting assembly machinery SAM(core) complex.

It localises to the mitochondrion outer membrane. Functionally, component of the ERMES/MDM complex, which serves as a molecular tether to connect the endoplasmic reticulum and mitochondria. Components of this complex are involved in the control of mitochondrial shape and protein biogenesis and may function in phospholipid exchange. MDM10 is involved in the late assembly steps of the general translocase of the mitochondrial outer membrane (TOM complex). Functions in the TOM40-specific route of the assembly of outer membrane beta-barrel proteins, including the association of TOM40 with the receptor TOM22 and small TOM proteins. Can associate with the SAM(core) complex as well as the MDM12-MMM1 complex, both involved in late steps of the major beta-barrel assembly pathway, that is responsible for biogenesis of all outer membrane beta-barrel proteins. May act as a switch that shuttles between both complexes and channels precursor proteins into the TOM40-specific pathway. Plays a role in mitochondrial morphology and in the inheritance of mitochondria. This is Mitochondrial distribution and morphology protein 10 from Pyricularia oryzae (strain 70-15 / ATCC MYA-4617 / FGSC 8958) (Rice blast fungus).